We begin with the raw amino-acid sequence, 569 residues long: Proline--tRNA ligase (569 aa).

It belongs to the class-II aminoacyl-tRNA synthetase family. ProS type 1 subfamily. As to quaternary structure, homodimer.

It localises to the cytoplasm. The catalysed reaction is tRNA(Pro) + L-proline + ATP = L-prolyl-tRNA(Pro) + AMP + diphosphate. Catalyzes the attachment of proline to tRNA(Pro) in a two-step reaction: proline is first activated by ATP to form Pro-AMP and then transferred to the acceptor end of tRNA(Pro). As ProRS can inadvertently accommodate and process non-cognate amino acids such as alanine and cysteine, to avoid such errors it has two additional distinct editing activities against alanine. One activity is designated as 'pretransfer' editing and involves the tRNA(Pro)-independent hydrolysis of activated Ala-AMP. The other activity is designated 'posttransfer' editing and involves deacylation of mischarged Ala-tRNA(Pro). The misacylated Cys-tRNA(Pro) is not edited by ProRS. The polypeptide is Proline--tRNA ligase (Desulforamulus reducens (strain ATCC BAA-1160 / DSM 100696 / MI-1) (Desulfotomaculum reducens)).